We begin with the raw amino-acid sequence, 267 residues long: GTP cyclohydrolase MptA (267 aa).

It belongs to the GTP cyclohydrolase IV family. In terms of assembly, homodimer. Requires Fe(2+) as cofactor.

It catalyses the reaction GTP + H2O = 7,8-dihydroneopterin 2',3'-cyclic phosphate + formate + diphosphate + H(+). It participates in cofactor biosynthesis; 5,6,7,8-tetrahydromethanopterin biosynthesis. Its function is as follows. Converts GTP to 7,8-dihydro-D-neopterin 2',3'-cyclic phosphate, the first intermediate in the biosynthesis of coenzyme methanopterin. The sequence is that of GTP cyclohydrolase MptA from Pyrococcus furiosus (strain ATCC 43587 / DSM 3638 / JCM 8422 / Vc1).